The following is a 98-amino-acid chain: Large ribosomal subunit protein eL21 (98 aa).

Over residues 1–24 (MVKKAHSFRRKTRGKLSKHPRRRG) the composition is skewed to basic residues. The disordered stretch occupies residues 1 to 27 (MVKKAHSFRRKTRGKLSKHPRRRGLPP).

It belongs to the eukaryotic ribosomal protein eL21 family.

This Thermococcus gammatolerans (strain DSM 15229 / JCM 11827 / EJ3) protein is Large ribosomal subunit protein eL21.